The primary structure comprises 282 residues: Sulfur carrier protein FdhD (282 aa).

The active-site Cysteine persulfide intermediate is Cys-126. 265-270 (FVRNNR) is a binding site for Mo-bis(molybdopterin guanine dinucleotide).

It belongs to the FdhD family.

It is found in the cytoplasm. Required for formate dehydrogenase (FDH) activity. Acts as a sulfur carrier protein that transfers sulfur from IscS to the molybdenum cofactor prior to its insertion into FDH. The polypeptide is Sulfur carrier protein FdhD (Thermoplasma acidophilum (strain ATCC 25905 / DSM 1728 / JCM 9062 / NBRC 15155 / AMRC-C165)).